The following is a 140-amino-acid chain: 3-hydroxyacyl-[acyl-carrier-protein] dehydratase FabZ (140 aa).

His47 is a catalytic residue.

It belongs to the thioester dehydratase family. FabZ subfamily.

The protein resides in the cytoplasm. The enzyme catalyses a (3R)-hydroxyacyl-[ACP] = a (2E)-enoyl-[ACP] + H2O. Involved in unsaturated fatty acids biosynthesis. Catalyzes the dehydration of short chain beta-hydroxyacyl-ACPs and long chain saturated and unsaturated beta-hydroxyacyl-ACPs. The protein is 3-hydroxyacyl-[acyl-carrier-protein] dehydratase FabZ of Streptococcus uberis (strain ATCC BAA-854 / 0140J).